Consider the following 1373-residue polypeptide: Inactive tyrosine-protein kinase PRAG1 (1373 aa).

Disordered stretches follow at residues 31–50 (AGHP…LPAR) and 197–235 (TSSC…DSEG). Tyrosine 238 is subject to Phosphotyrosine. 2 stretches are compositionally biased toward basic and acidic residues: residues 250-263 (DAVH…RRGG) and 272-284 (QGPR…EEKQ). Residues 250 to 338 (DAVHSTEGSG…SGASSPFAPH (89 aa)) form a disordered region. The span at 317-333 (SSSDGLSCGSSRSGASS) shows a compositional bias: low complexity. Phosphotyrosine occurs at positions 343 and 391. Disordered stretches follow at residues 376 to 448 (QPAS…NPAP) and 468 to 794 (IYLS…LPQK). Residues 419 to 438 (SQGQVWTGDTWIQKTPPSWS) show a composition bias toward polar residues. Residues 506–522 (RESHPHNVTENTAKEKP) are compositionally biased toward basic and acidic residues. Over residues 526–538 (PKLSKSSPGGSPV) the composition is skewed to low complexity. Polar residues-rich tracts occupy residues 568–578 (NLTSSCHTNGV) and 655–670 (TSGQ…SKSA). 2 positions are modified to phosphoserine: serine 671 and serine 720. 2 stretches are compositionally biased toward polar residues: residues 711 to 721 (VSQSSAESLSP) and 729 to 740 (SFTTGSTDSLAS). Residues serine 757 and serine 802 each carry the phosphoserine modification. Residues 804–823 (PDGFFWTQGSPKPRTASPKL) are disordered. The tract at residues 911 to 954 (STQLQLHSLLSSISSKEGTYAKLGGLYTQSLARLVTKCEDLFMG) is required for homodimerization. The Protein kinase domain occupies 945–1296 (VTKCEDLFMG…EAKRVLQCLL (352 aa)). The segment covering 1041–1050 (LASPDTSSKD) has biased composition (polar residues). 2 disordered regions span residues 1041–1062 (LASP…PPAQ) and 1138–1171 (QSSP…QGGP). Low complexity predominate over residues 1139–1167 (SSPGPSATPTVPTTTSRCPSAAPAATTAC). The tract at residues 1298–1373 (GPRRELVEQP…LQSLKLLQLL (76 aa)) is required for homodimerization.

It belongs to the protein kinase superfamily. Homodimer. Dimerization leads to the catalytic activation of CSK. Interacts (via C-terminus) with RND2. Interacts with CSK (via SH2 domain) in a Tyr-391 phosphorylation-dependent manner; this interaction potentiates kinase activity of CSK. Interacts with NOTCH1 intracellular domain (N1ICD). Forms a complex with PRAG1, N1ICD and MAML1, in a MAML1-dependent manner. Post-translationally, phosphorylated by CSK on Tyr-238, Tyr-343, and Tyr-391; Tyr-391 is a primary site of phosphorylation.

It localises to the cytoplasm. The protein localises to the nucleus. The protein resides in the cell junction. Its subcellular location is the focal adhesion. Catalytically inactive protein kinase that acts as a scaffold protein. Functions as an effector of the small GTPase RND2, which stimulates RhoA activity and inhibits NGF-induced neurite outgrowth. Promotes Src family kinase (SFK) signaling by regulating the subcellular localization of CSK, a negative regulator of these kinases, leading to the regulation of cell morphology and motility by a CSK-dependent mechanism. Acts as a critical coactivator of Notch signaling. In Mus musculus (Mouse), this protein is Inactive tyrosine-protein kinase PRAG1.